Consider the following 147-residue polypeptide: UPF0306 protein YPTB0506 (147 aa).

It belongs to the UPF0306 family.

The protein is UPF0306 protein YPTB0506 of Yersinia pseudotuberculosis serotype I (strain IP32953).